Here is a 378-residue protein sequence, read N- to C-terminus: UPF0754 membrane protein BCA_0919 (378 aa).

2 consecutive transmembrane segments (helical) span residues 1–21 (MNIW…GGFT) and 357–377 (YLGA…LLFL).

Belongs to the UPF0754 family.

Its subcellular location is the cell membrane. This chain is UPF0754 membrane protein BCA_0919, found in Bacillus cereus (strain 03BB102).